Consider the following 212-residue polypeptide: Pyridoxine/pyridoxamine 5'-phosphate oxidase (212 aa).

Residues 7 to 10 and Lys65 each bind substrate; that span reads RRQY. Residues 60–65, 75–76, Arg81, Lys82, and Gln104 each bind FMN; these read RIVLLK and FT. 3 residues coordinate substrate: Tyr122, Arg126, and Ser130. Residues 139–140 and Trp184 contribute to the FMN site; that span reads QS. 190-192 contributes to the substrate binding site; that stretch reads RLH. Residue Arg194 coordinates FMN.

Belongs to the pyridoxamine 5'-phosphate oxidase family. As to quaternary structure, homodimer. FMN serves as cofactor.

It carries out the reaction pyridoxamine 5'-phosphate + O2 + H2O = pyridoxal 5'-phosphate + H2O2 + NH4(+). It catalyses the reaction pyridoxine 5'-phosphate + O2 = pyridoxal 5'-phosphate + H2O2. Its pathway is cofactor metabolism; pyridoxal 5'-phosphate salvage; pyridoxal 5'-phosphate from pyridoxamine 5'-phosphate: step 1/1. The protein operates within cofactor metabolism; pyridoxal 5'-phosphate salvage; pyridoxal 5'-phosphate from pyridoxine 5'-phosphate: step 1/1. In terms of biological role, catalyzes the oxidation of either pyridoxine 5'-phosphate (PNP) or pyridoxamine 5'-phosphate (PMP) into pyridoxal 5'-phosphate (PLP). This is Pyridoxine/pyridoxamine 5'-phosphate oxidase from Alteromonas mediterranea (strain DSM 17117 / CIP 110805 / LMG 28347 / Deep ecotype).